The chain runs to 203 residues: ATP-dependent Clp protease proteolytic subunit (203 aa).

Ser-107 (nucleophile) is an active-site residue. His-132 is a catalytic residue.

The protein belongs to the peptidase S14 family. Fourteen ClpP subunits assemble into 2 heptameric rings which stack back to back to give a disk-like structure with a central cavity, resembling the structure of eukaryotic proteasomes.

It is found in the cytoplasm. The catalysed reaction is Hydrolysis of proteins to small peptides in the presence of ATP and magnesium. alpha-casein is the usual test substrate. In the absence of ATP, only oligopeptides shorter than five residues are hydrolyzed (such as succinyl-Leu-Tyr-|-NHMec, and Leu-Tyr-Leu-|-Tyr-Trp, in which cleavage of the -Tyr-|-Leu- and -Tyr-|-Trp bonds also occurs).. Its function is as follows. Cleaves peptides in various proteins in a process that requires ATP hydrolysis. Has a chymotrypsin-like activity. Plays a major role in the degradation of misfolded proteins. The protein is ATP-dependent Clp protease proteolytic subunit of Shewanella pealeana (strain ATCC 700345 / ANG-SQ1).